We begin with the raw amino-acid sequence, 929 residues long: Ribonucleoside-diphosphate reductase large chain (929 aa).

Residues 1 to 92 enclose the ATP-cone domain; it reads MYVKKRDGRQ…VSNLHKQTKK (92 aa). Residues 5-6, 11-17, threonine 53, and aspartate 57 contribute to the ATP site; these read KR and ERVQFDK. Positions 202 and 217 each coordinate GDP. Cysteine 218 and cysteine 444 form a disulfide bridge. DTTP contacts are provided by residues 226-228, lysine 243, arginine 256, and 263-264; these read DSI and AG. Asparagine 427 is a GDP binding site. The Proton acceptor role is filled by asparagine 427. Cysteine 429 functions as the Cysteine radical intermediate in the catalytic mechanism. GDP is bound by residues glutamate 431 and 605–608; that span reads TAST. The Proton acceptor role is filled by glutamate 431. Positions 789–904 are disordered; it reads ENTSGPRPYA…RDENIYSNAP (116 aa). Polar residues predominate over residues 800 to 809; it reads TGVSGTSTPI. Basic and acidic residues predominate over residues 868 to 884; that stretch reads VKTEDIGSPLLERKEGQ. Positions 885-894 are enriched in acidic residues; that stretch reads NEDVDEDSQE.

The protein belongs to the ribonucleoside diphosphate reductase large chain family.

The enzyme catalyses a 2'-deoxyribonucleoside 5'-diphosphate + [thioredoxin]-disulfide + H2O = a ribonucleoside 5'-diphosphate + [thioredoxin]-dithiol. Its activity is regulated as follows. Under complex allosteric control mediated by deoxynucleoside triphosphates and ATP binding to separate specificity and activation sites on the large subunit. The type of nucleotide bound at the specificity site determines substrate preference. It seems probable that ATP makes the enzyme reduce CDP and UDP, dGTP favors ADP reduction and dTTP favors GDP reduction. Stimulated by ATP and inhibited by dATP binding to the activity site. Provides the precursors necessary for DNA synthesis. Catalyzes the biosynthesis of deoxyribonucleotides from the corresponding ribonucleotides. In Neurospora crassa (strain ATCC 24698 / 74-OR23-1A / CBS 708.71 / DSM 1257 / FGSC 987), this protein is Ribonucleoside-diphosphate reductase large chain (rnr-1).